The primary structure comprises 729 residues: Fatty acid oxidation complex subunit alpha (729 aa).

Residues 1 to 189 (MLYKGDTLYL…KIGLVDGVVK (189 aa)) form an enoyl-CoA hydratase/isomerase region. Substrate is bound at residue Asp296. A 3-hydroxyacyl-CoA dehydrogenase region spans residues 311 to 729 (ETPKQAAVLG…ARPVGSLKTA (419 aa)). Residues Met324, Asp343, 400–402 (VVE), Lys407, and Ser429 contribute to the NAD(+) site. His450 acts as the For 3-hydroxyacyl-CoA dehydrogenase activity in catalysis. Asn453 lines the NAD(+) pocket. Positions 500 and 660 each coordinate substrate. The segment at 708 to 729 (RHNEPYYPPVEPARPVGSLKTA) is disordered.

This sequence in the N-terminal section; belongs to the enoyl-CoA hydratase/isomerase family. In the C-terminal section; belongs to the 3-hydroxyacyl-CoA dehydrogenase family. Heterotetramer of two alpha chains (FadB) and two beta chains (FadA).

The catalysed reaction is a (3S)-3-hydroxyacyl-CoA + NAD(+) = a 3-oxoacyl-CoA + NADH + H(+). It catalyses the reaction a (3S)-3-hydroxyacyl-CoA = a (2E)-enoyl-CoA + H2O. It carries out the reaction a 4-saturated-(3S)-3-hydroxyacyl-CoA = a (3E)-enoyl-CoA + H2O. The enzyme catalyses (3S)-3-hydroxybutanoyl-CoA = (3R)-3-hydroxybutanoyl-CoA. The catalysed reaction is a (3Z)-enoyl-CoA = a 4-saturated (2E)-enoyl-CoA. It catalyses the reaction a (3E)-enoyl-CoA = a 4-saturated (2E)-enoyl-CoA. It participates in lipid metabolism; fatty acid beta-oxidation. Involved in the aerobic and anaerobic degradation of long-chain fatty acids via beta-oxidation cycle. Catalyzes the formation of 3-oxoacyl-CoA from enoyl-CoA via L-3-hydroxyacyl-CoA. It can also use D-3-hydroxyacyl-CoA and cis-3-enoyl-CoA as substrate. This chain is Fatty acid oxidation complex subunit alpha, found in Salmonella newport (strain SL254).